The following is a 371-amino-acid chain: Sensor histidine kinase YvfT (371 aa).

The Extracellular segment spans residues 1-10 (MKKAISIFPK). A helical membrane pass occupies residues 11–31 (EFGFFPYIFLVYTIMPFLSLL). At 32–38 (KESGVKQ) the chain is on the cytoplasmic side. Residues 39–59 (GIGYGMLLLFVAAYRQLFCSV) traverse the membrane as a helical segment. Residues 60–71 (GKASFTYWLIVQ) lie on the Extracellular side of the membrane. The chain crosses the membrane as a helical span at residues 72-92 (MAVILMYSVFYNITYIYLGFF). Over 93–109 (PANFVGYYKEKTNFNRA) the chain is Cytoplasmic. Residues 110–130 (FCALIFILLFPCLYQFIANSV) form a helical membrane-spanning segment. Topologically, residues 131-135 (SLREL) are extracellular. Residues 136–156 (FSVLPFLVIMLISPFGIRSMF) traverse the membrane as a helical segment. Residues 157-371 (RRIELEAKLA…LTIPLIKKAE (215 aa)) lie on the Cytoplasmic side of the membrane. The 182-residue stretch at 187–368 (DLHDTLGHTL…VVALTIPLIK (182 aa)) folds into the Histidine kinase domain. H189 bears the Phosphohistidine; by autocatalysis mark.

The protein resides in the cell membrane. The catalysed reaction is ATP + protein L-histidine = ADP + protein N-phospho-L-histidine.. Member of the two-component regulatory system YvfT/YvfU. Probably activates YvfU by phosphorylation. The polypeptide is Sensor histidine kinase YvfT (yvfT) (Bacillus subtilis (strain 168)).